The following is a 269-amino-acid chain: Staphylococcal secretory antigen ssaA2 (269 aa).

The first 27 residues, Met-1–Ala-27, serve as a signal peptide directing secretion. 7 tandem repeats follow at residues Tyr-83–Asn-85, Tyr-88–Asn-90, Tyr-91–Asn-93, Tyr-97–Asn-99, Tyr-103–Asn-105, Tyr-106–Asn-108, and Tyr-115–Asn-117. Residues Tyr-83–Tyr-115 form a 7 X 3 AA repeats of Y-[NS]-N region. A Peptidase C51 domain is found at Met-148–His-269.

The protein resides in the secreted. Not known; immunogenic protein. The polypeptide is Staphylococcal secretory antigen ssaA2 (ssaA2) (Staphylococcus aureus (strain MSSA476)).